The chain runs to 545 residues: T-complex protein 1 subunit alpha (545 aa).

It belongs to the TCP-1 chaperonin family. In terms of assembly, heterooligomeric complex of about 850 to 900 kDa that forms two stacked rings, 12 to 16 nm in diameter.

It is found in the cytoplasm. Functionally, molecular chaperone; assists the folding of proteins upon ATP hydrolysis. Known to play a role, in vitro, in the folding of actin and tubulin. The protein is T-complex protein 1 subunit alpha (TCP-1A) of Schistosoma mansoni (Blood fluke).